The chain runs to 201 residues: Peptidyl-prolyl cis-trans isomerase FKBP11 (201 aa).

An N-terminal signal peptide occupies residues 1-27; it reads MTLSPLLLPLQLLLLLLFSGAVCRAEA. Residues 57–144 form the PPIase FKBP-type domain; it reads GDTLHIHYTG…QYDVELIALI (88 aa). A helical membrane pass occupies residues 156-176; it reads ILPLVGIAMVPALLGLIGYHL.

This sequence belongs to the FKBP-type PPIase family. In terms of assembly, interacts with IFITM5.

It is found in the membrane. The enzyme catalyses [protein]-peptidylproline (omega=180) = [protein]-peptidylproline (omega=0). Functionally, PPIases accelerate the folding of proteins during protein synthesis. The protein is Peptidyl-prolyl cis-trans isomerase FKBP11 (Fkbp11) of Mus musculus (Mouse).